A 172-amino-acid chain; its full sequence is NADH-ubiquinone oxidoreductase chain 6 (172 aa).

6 helical membrane-spanning segments follow: residues 1–21, 25–45, 48–68, 86–106, 108–128, and 141–161; these read MLSLVLCFFVMFLLGVAVVVL, PYFSALGLVFVAVSGCFIVLY, GTFLSLVLVLLYLGGMMVVFV, VIWFFVICVLCICFAGYMSFN, FFLDVSVACEGADYTGGIFGA, and LILVLAGWALLVCLFSVLVVV.

Belongs to the complex I subunit 6 family.

It is found in the mitochondrion membrane. The catalysed reaction is a ubiquinone + NADH + 5 H(+)(in) = a ubiquinol + NAD(+) + 4 H(+)(out). Functionally, core subunit of the mitochondrial membrane respiratory chain NADH dehydrogenase (Complex I) that is believed to belong to the minimal assembly required for catalysis. Complex I functions in the transfer of electrons from NADH to the respiratory chain. The immediate electron acceptor for the enzyme is believed to be ubiquinone. In Petromyzon marinus (Sea lamprey), this protein is NADH-ubiquinone oxidoreductase chain 6 (MT-ND6).